The primary structure comprises 217 residues: Dense granule protein 1 (217 aa).

Positions 1–19 are cleaved as a signal peptide; the sequence is MARQATFIVALCVCGLAIA. Over residues 171–183 the composition is skewed to polar residues; it reads VASEDSALGNSEE. The interval 171 to 217 is disordered; the sequence is VASEDSALGNSEEQYVEGTVNGSSDPEQERAGGPLIPEGDEQEVDTE. N-linked (GlcNAc...) asparagine glycosylation occurs at Asn-191. Residues 208-217 are compositionally biased toward acidic residues; it reads EGDEQEVDTE.

Belongs to the Gra7 family.

The protein localises to the secreted. The protein is Dense granule protein 1 (DG1) of Neospora caninum (Coccidian parasite).